An 84-amino-acid polypeptide reads, in one-letter code: Beta-cardiotoxin CTX9 (84 aa).

Positions 1–21 are cleaved as a signal peptide; that stretch reads MKTLLLTLVVVTIVCLDLGYT. Intrachain disulfides connect Cys-24/Cys-43, Cys-36/Cys-61, Cys-65/Cys-76, and Cys-77/Cys-82.

This sequence belongs to the three-finger toxin family. Short-chain subfamily. Aminergic toxin sub-subfamily. As to expression, expressed by the venom gland.

The protein localises to the secreted. Functionally, acts as a beta-blocker by binding to beta-1 and beta-2 adrenergic receptors (ADRB1 and ADRB2). It dose-dependently decreases the heart rate (bradycardia), whereas conventional cardiotoxins increases it. At 100 mg/kg, intraperitoneal injection into mice provokes labored breathing, impaired locomotion, lack of response to external stimuli, and death (after 30 minutes). The protein is Beta-cardiotoxin CTX9 of Ophiophagus hannah (King cobra).